A 258-amino-acid chain; its full sequence is uncharacterized protein (258 aa).

6 helical membrane-spanning segments follow: residues 24–44 (IPLF…VNIF), 70–90 (PLVH…FLLM), 100–120 (LCTI…AYLI), 130–150 (VYVG…LNLF), 157–177 (LLNL…VLGL), and 181–201 (FSIT…FSFA). His-188 is an active-site residue.

The protein belongs to the peptidase S54 family.

It is found in the golgi apparatus membrane. This is an uncharacterized protein from Schizosaccharomyces pombe (strain 972 / ATCC 24843) (Fission yeast).